The chain runs to 432 residues: Trigger factor (432 aa).

Residues Gly165–Gln250 form the PPIase FKBP-type domain.

Belongs to the FKBP-type PPIase family. Tig subfamily.

Its subcellular location is the cytoplasm. The catalysed reaction is [protein]-peptidylproline (omega=180) = [protein]-peptidylproline (omega=0). Functionally, involved in protein export. Acts as a chaperone by maintaining the newly synthesized protein in an open conformation. Functions as a peptidyl-prolyl cis-trans isomerase. This chain is Trigger factor, found in Wolinella succinogenes (strain ATCC 29543 / DSM 1740 / CCUG 13145 / JCM 31913 / LMG 7466 / NCTC 11488 / FDC 602W) (Vibrio succinogenes).